A 359-amino-acid polypeptide reads, in one-letter code: E3 ubiquitin-protein ligase RNF146 (359 aa).

Residues 38–76 (CAICLQTCVHPVSLPCKHVFCYLCVKGASWLGKRCALCR) form an RING-type zinc finger. Residues lysine 86 and lysine 96 each participate in a glycyl lysine isopeptide (Lys-Gly) (interchain with G-Cter in ubiquitin) cross-link. In terms of domain architecture, WWE spans 93-169 (EELKAASRGN…EHGRRRKIKR (77 aa)). Residues tyrosine 109, arginine 112, and tryptophan 116 each contribute to the a glycoprotein site. Lysine 132 is covalently cross-linked (Glycyl lysine isopeptide (Lys-Gly) (interchain with G-Cter in ubiquitin)). Tyrosine 146, glutamine 155, arginine 165, and lysine 177 together coordinate a glycoprotein. A Glycyl lysine isopeptide (Lys-Gly) (interchain with G-Cter in ubiquitin) cross-link involves residue lysine 177. 2 disordered regions span residues 197–243 (SSAD…DAGI) and 261–359 (ERSH…VTEV). Residues 199-212 (ADGADSGSAQTGAS) show a composition bias toward low complexity. Residues 217 to 235 (VPSSTRPLTSVDGQLTSPV) are compositionally biased toward polar residues. Over residues 284 to 298 (SVEETESDASSDSED) the composition is skewed to acidic residues. A phosphoserine mark is found at serine 290 and serine 294. Over residues 306 to 324 (HSLTQQRPLVPNGNQTVAD) the composition is skewed to polar residues.

As to quaternary structure, can form homooligomers. Interacts with PARsylated AXIN1, AXIN2, BLZF1, CASC3, H1-2, IPO7, LIG3, NCL, PARP1, XRCC1, XRCC5 and XRCC6. Interacts with DDB1, DHX15, IQGAP1, LRPPRC, PARP2, PRKDC, RUVBL2, TNKS1 and TNKS2. Binding often leads to interactor ubiquitination, in the presence of the appropriate E1 and E2 enzymes, and proteasomal degradation. In terms of processing, ubiquitinated; autoubiquitinated. Autoubiquitination is enhanced upon PAR-binding. Expressed at relatively high levels in the brain. Also present in spleen, heart, kidney, testis and liver. In the brain, expressed in the cerebellum, hippocampus, striatum, cortex, frontal cortex and, at lowest levels, in olfactory bulb (at protein level). Predominantly expressed in neurons.

It is found in the cytoplasm. The protein localises to the cytosol. It localises to the nucleus. It carries out the reaction S-ubiquitinyl-[E2 ubiquitin-conjugating enzyme]-L-cysteine + [acceptor protein]-L-lysine = [E2 ubiquitin-conjugating enzyme]-L-cysteine + N(6)-ubiquitinyl-[acceptor protein]-L-lysine.. It participates in protein modification; protein ubiquitination. Its function is as follows. E3 ubiquitin-protein ligase that specifically binds poly-ADP-ribosylated (PARsylated) proteins and mediates their ubiquitination and subsequent degradation. May regulate many important biological processes, such as cell survival and DNA damage response. Acts as an activator of the Wnt signaling pathway by mediating the ubiquitination of PARsylated AXIN1 and AXIN2, 2 key components of the beta-catenin destruction complex. Acts in cooperation with tankyrase proteins (TNKS and TNKS2), which mediate PARsylation of target proteins AXIN1, AXIN2, BLZF1, CASC3, TNKS and TNKS2. Recognizes and binds tankyrase-dependent PARsylated proteins via its WWE domain and mediates their ubiquitination, leading to their degradation. Different ubiquitin linkage types have been observed: TNKS2 undergoes ubiquitination at 'Lys-48' and 'Lys-63', while AXIN1 is only ubiquitinated at 'Lys-48'. May regulate TNKS and TNKS2 subcellular location, preventing aggregation at a centrosomal location. Neuroprotective protein. Protects the brain against N-methyl-D-aspartate (NMDA) receptor-mediated glutamate excitotoxicity and ischemia, by interfering with PAR-induced cell death, called parthanatos. Prevents nuclear translocation of AIFM1 in a PAR-binding dependent manner. Does not affect PARP1 activation. Protects against cell death induced by DNA damaging agents, such as N-methyl-N-nitro-N-nitrosoguanidine (MNNG) and rescues cells from G1 arrest. Promotes cell survival after gamma-irradiation. Facilitates DNA repair. The sequence is that of E3 ubiquitin-protein ligase RNF146 (Rnf146) from Mus musculus (Mouse).